The chain runs to 234 residues: Sugar fermentation stimulation protein homolog (234 aa).

It belongs to the SfsA family.

The chain is Sugar fermentation stimulation protein homolog from Shewanella frigidimarina (strain NCIMB 400).